The following is a 57-amino-acid chain: MPAIQPLLYLTFLLLILLYLIITLYVWVVSTITYKTAVRHAALYQRSLFRWSLDHSL.

At 1 to 8 the chain is on the virion surface side; that stretch reads MPAIQPLL. The chain crosses the membrane as a helical span at residues 9 to 29; the sequence is YLTFLLLILLYLIITLYVWVV. Residues 30-57 are Intravirion-facing; that stretch reads STITYKTAVRHAALYQRSLFRWSLDHSL.

This sequence belongs to the rubulavirus small hydrophobic protein family. In terms of assembly, interacts with host TNFRSF1A, RIPK1 and IRAK1; these interactions interfere with host NF-kappa-B activation at the level of receptor complexes. Interacts with host protein UBQLN4.

Its subcellular location is the virion membrane. The protein resides in the host cell membrane. Functionally, plays a role in the inhibition of the host NF-kappa-B pathway. This inhibition occurs at the receptor level, by preventing the signaling of TNFR1 as well as IL-1R and TLR3. This chain is Small hydrophobic protein (SH), found in Homo sapiens (Human).